Consider the following 198-residue polypeptide: Small ribosomal subunit protein eS1 (198 aa).

Belongs to the eukaryotic ribosomal protein eS1 family.

The polypeptide is Small ribosomal subunit protein eS1 (Methanospirillum hungatei JF-1 (strain ATCC 27890 / DSM 864 / NBRC 100397 / JF-1)).